Here is a 793-residue protein sequence, read N- to C-terminus: E3 UFM1-protein ligase 1 (793 aa).

N-acetylalanine is present on A2. The mediates interaction with DDRGK1 stretch occupies residues 2–200 (ADAWEEIRRL…RGLFSAITRP (199 aa)). The required for E3 UFM1-protein ligase activity stretch occupies residues 2 to 212 (ADAWEEIRRL…VNSLVSKYGF (211 aa)). An involved in CDK5RAP3-binding region spans residues 121 to 250 (DQLSEEVNDK…KAVFVPDIYS (130 aa)). The segment at 200-400 (PTPVNSLVSK…NPVHLITEED (201 aa)) is mediates interaction with TRIP4. A disordered region spans residues 410-473 (VNTSKKDKKD…SSHGGKKKPD (64 aa)). Position 433 is an omega-N-methylarginine (R433). A phosphoserine mark is found at S458 and S462. The interval 490–683 (IQDAPEEFIS…QLKVTEDPAL (194 aa)) is mediates interaction with CDK5RAP3. T535 carries the post-translational modification Phosphothreonine. Residues 742 to 765 (NKKTGQGEDPSSDELDKEQHDVTN) are disordered. A phosphoserine mark is found at S752 and S753.

The protein belongs to the UFL1 family. In terms of assembly, catalytic component of the UFM1 ribosome E3 ligase (UREL) complex, composed of UFL1, DDRGK1 and CDK5RAP3. Interacts with E2-like enzyme UFC1. Interacts with RELA. Interacts with NBN; promoting recruitment to double-strand breaks following DNA damage. Interacts (when phosphorylated) with YWHAG/14-3-3-gamma; sequestering UFL1 and preventing its association with PDCD1/PD-1 substrate. In terms of processing, ubiquitinated, leading to its degradation by the proteasome. Interaction with CDK5RAP3 protects both proteins against ubiquitination and degradation via the proteasome. Phosphorylated at Ser-462 by ATM, enhancing protein ligase activity and promoting ATM activation in a positive feedback loop. Phosphorylation at Thr-535 by AMPK promotes its interaction with YWHAG/14-3-3-gamma, thereby preventing UFL1 association with PDCD1/PD-1 substrate. As to expression, ubiquitously expressed with higher expression in pancreatic islets and other secretory tissues. In the embryonic brain at 17 dpc, detected in Sox2-positive neural stem cells and in Slc1a3/GLAST-positive radial glia. In perinatal brain, highly expressed in Slc1a3-positive Bergmann glia of the cerebellum. Continues to be expressed in Bergmann glia of adult brain at 16 weeks. Expressed in adult heart. Highly expressed in the intestinal exocrine cells.

The protein localises to the endoplasmic reticulum membrane. It localises to the cytoplasm. It is found in the cytosol. The protein resides in the nucleus. Its subcellular location is the chromosome. Its function is as follows. E3 protein ligase that mediates ufmylation, the covalent attachment of the ubiquitin-like modifier UFM1 to lysine residues on target proteins, and which plays a key role in various processes, such as ribosome recycling, response to DNA damage, interferon response or reticulophagy (also called ER-phagy). Catalyzes ufmylation of many protein, such as CD274/PD-L1, CDK5RAP3, CYB5R3, DDRGK1, EIF6, histone H4, MRE11, P4HB, PDCD1/PD-1, TRIP4, RPN1, RPS20/uS10, RPL10/uL16, RPL26/uL24, SYVN1/HRD1 and TP53/p53. As part of the UREL complex, plays a key role in ribosome recycling by catalyzing mono-ufmylation of RPL26/uL24 subunit of the 60S ribosome. Ufmylation of RPL26/uL24 occurs on free 60S ribosomes following ribosome dissociation: it weakens the junction between post-termination 60S subunits and SEC61 translocons, promoting release and recycling of the large ribosomal subunit from the endoplasmic reticulum membrane. Ufmylation of RPL26/uL24 and subsequent 60S ribosome recycling either take place after normal termination of translation or after ribosome stalling during cotranslational translocation at the endoplasmic reticulum. Involved in reticulophagy in response to endoplasmic reticulum stress by mediating ufmylation of proteins such as CYB5R3 and RPN1, thereby promoting lysosomal degradation of ufmylated proteins. Ufmylation in response to endoplasmic reticulum stress is essential for processes such as hematopoiesis, blood vessel morphogenesis or inflammatory response. Mediates ufmylation of DDRGK1 and CDK5RAP3; the role of these modifications is however unclear: as both DDRGK1 and CDK5RAP3 act as substrate adapters for ufmylation, it is uncertain whether ufmylation of these proteins is a collateral effect or is required for ufmylation. Acts as a negative regulator of T-cell activation by mediating ufmylation and stabilization of PDCD1/PD-1. Also involved in the response to DNA damage: recruited to double-strand break sites following DNA damage and mediates monoufmylation of histone H4 and ufmylation of MRE11. Mediates ufmylation of TP53/p53, promoting its stability. Catalyzes ufmylation of TRIP4, thereby playing a role in nuclear receptor-mediated transcription. Required for hematopoietic stem cell function and hematopoiesis. The chain is E3 UFM1-protein ligase 1 from Mus musculus (Mouse).